The primary structure comprises 326 residues: G-protein coupled receptor 171 (326 aa).

Over 1-19 (MTNSSMFCPIYRDLEPFTY) the chain is Extracellular. Residues 20–40 (FFYLVYLIGIIGSCFATWAFI) traverse the membrane as a helical segment. The Cytoplasmic portion of the chain corresponds to 41 to 48 (QKSTNHRC). The helical transmembrane segment at 49 to 69 (VSIYLINLLTADFLLTLALPV) threads the bilayer. Over 70–89 (KIVVDLGVAPWKLRIFHCQV) the chain is Extracellular. Cysteines 87 and 165 form a disulfide. Residues 90 to 110 (TACLIYINMYLSIIFLAFVSI) form a helical membrane-spanning segment. Over 111–133 (DRCLQLVHSCKIYRIQEPGFAKM) the chain is Cytoplasmic. The chain crosses the membrane as a helical span at residues 134–154 (ISAVVWLMVLLIMVPNMVIPI). The Extracellular segment spans residues 155-182 (KNIKEKSNVGCMEFKREFGKNWHLLTNF). The helical transmembrane segment at 183 to 203 (ICVAIFLNFSAIILISNFLVI) threads the bilayer. The Cytoplasmic portion of the chain corresponds to 204-221 (RQLYRNRDNANYPSVKSA). Residues 222 to 242 (LLNILLVTASYIICFVPYHAV) form a helical membrane-spanning segment. Over 243 to 268 (RIPYTLSQTEVISDCSTRIALFKAKE) the chain is Extracellular. Residues 269-289 (ATLLLAVSNLCFDPILYYHLS) form a helical membrane-spanning segment. Over 290–326 (KAFRLKVTETFASPQKMKAREEKPRRENDVQSTGSAC) the chain is Cytoplasmic. Residues 305 to 326 (KMKAREEKPRRENDVQSTGSAC) are disordered. Basic and acidic residues predominate over residues 307-318 (KAREEKPRREND).

It belongs to the G-protein coupled receptor 1 family.

The protein localises to the cell membrane. In terms of biological role, G-protein coupled receptor for Big LEN, a 16-amino acid neuropeptide produced from the precursor protein, proSAAS (encoded by PCSK1N). Acts through a G(i)-alpha-mediated pathway in response to Big LEN. Big LEN-GPR171 system plays an important role in regulating feeding and metabolism. Also plays a role in modulating fear and anxiety-like behaviors in the basolateral amygdala. Big LEN-GPR171 modulates the mu-type opioid receptor signaling and antinociception. Acts as a negative regulator T cell function. In Rattus norvegicus (Rat), this protein is G-protein coupled receptor 171.